An 879-amino-acid polypeptide reads, in one-letter code: MTQEYSTLRNNISMLGRFLGETINDAQGEDILELIENIRKLSRNSRAGDDKARQALLDTLGSISNENIIPVARAFSQFLNLTNIAEQYQTISREHSLAQSSSQSLSELFKRLKEQNASVEEVHKTVEKLLIELVLTAHPTETTRRSLIHKHIEINKCLSKLEHHDLTEKERNIIERLLLRLIAEAWHTNEIRTVRPTPFDEAKWGFAMLENSLWQAVPEFLRQLNETAREFLGYDLSVGLKPVRISSWMGGDRDGNPFVTAQITKKVLYFARWKAADLFLQDISKLADELSMMKCSDEFRDKYGEHLEPYRFVVKNLRNQLTATLAYFDDHLSNRTPRVSESEIILEDNQLWEPLYDCYQSLIQCGMRIIANGSLLNILHRISCFGVTLSQMDIRQESTRHTDAIAEITRYIGLGDYSQWMEDDKQAFLIRELSSRRPLIPQNWTPSPETKEILDTCKVIAQQKQGVIACYVISMARSASDVLAVHLLLKESGVPYHIPVVPLFETLEDLDAAEKVMTQLFNVGWYRGVINNRQMVMIGYSDSAKDAGMMAASWAQYRAQEALVNLTEKLGIELTLFHGRGGTIGRGGAPAHAALLSQPPRSLKNGLRVTEQGEMIRFKLGLPAVAVETFDLYASAILEANLLPPPEPKPEWRTIMDELSTISCDIYRGVVRGDKDFVPYFRSATPEQELSKLPLGSRPAKRNPNGGVESLRAIPWIFAWMQNRLMLPAWLGAGAAIRQVIEQGKGDIIHKMCENWPFFSTRIGMLEMVFSKSDTWLSQQYDQRLVKKELWYLGENLRKQLEDDIQTVLSLSHQSELMSDLPWIADSIALRNIYTDPLNLLQVELLHRFRENPEQVNPDVEQALMITITGIAAGMRNTG.

Residues histidine 138 and lysine 545 contribute to the active site.

It belongs to the PEPCase type 1 family. It depends on Mg(2+) as a cofactor.

The enzyme catalyses oxaloacetate + phosphate = phosphoenolpyruvate + hydrogencarbonate. Its function is as follows. Forms oxaloacetate, a four-carbon dicarboxylic acid source for the tricarboxylic acid cycle. This chain is Phosphoenolpyruvate carboxylase (ppc), found in Haemophilus influenzae (strain ATCC 51907 / DSM 11121 / KW20 / Rd).